The following is a 487-amino-acid chain: NADH-quinone oxidoreductase subunit N (487 aa).

The next 13 helical transmembrane spans lie at 9 to 29, 38 to 58, 73 to 93, 108 to 128, 161 to 181, 208 to 228, 240 to 260, 277 to 297, 306 to 326, 328 to 348, 374 to 394, 408 to 430, and 452 to 472; these read PVLPEIFMAVAGLALLMLGVF, VSVLVILALGAAMVLVSSLGG, FAGFAKGLVLVASAIATAMSL, VLVLFATLGMMMMISANDFIA, FVLGSLASGLLLYGISLLYGF, IIAGLVFVLAGLSFKVSAVPF, PTPVTSFFAVAPKIAALCLLV, VVTFIAIGSMFVGSFAAVVQT, SSIGHVGFVLVGIAAGSTLGI, GVLIYLAIYLFMNVGAFAVIL, AFVMAVLMFSMAGVPPLAGFW, LYTLSILGVLSSVVSTYYYLRIV, and LVMAVSTIVILAFTLIPAPLV.

This sequence belongs to the complex I subunit 2 family. As to quaternary structure, NDH-1 is composed of 14 different subunits. Subunits NuoA, H, J, K, L, M, N constitute the membrane sector of the complex.

It localises to the cell inner membrane. It carries out the reaction a quinone + NADH + 5 H(+)(in) = a quinol + NAD(+) + 4 H(+)(out). Functionally, NDH-1 shuttles electrons from NADH, via FMN and iron-sulfur (Fe-S) centers, to quinones in the respiratory chain. The immediate electron acceptor for the enzyme in this species is believed to be ubiquinone. Couples the redox reaction to proton translocation (for every two electrons transferred, four hydrogen ions are translocated across the cytoplasmic membrane), and thus conserves the redox energy in a proton gradient. The chain is NADH-quinone oxidoreductase subunit N from Paramagnetospirillum magneticum (strain ATCC 700264 / AMB-1) (Magnetospirillum magneticum).